The following is a 365-amino-acid chain: UDP-N-acetylglucosamine--N-acetylmuramyl-(pentapeptide) pyrophosphoryl-undecaprenol N-acetylglucosamine transferase (365 aa).

Residues 19-21, N131, R170, S201, I255, 274-279, and Q300 contribute to the UDP-N-acetyl-alpha-D-glucosamine site; these read TGG and ALTVTE.

This sequence belongs to the glycosyltransferase 28 family. MurG subfamily.

The protein resides in the cell inner membrane. It catalyses the reaction di-trans,octa-cis-undecaprenyl diphospho-N-acetyl-alpha-D-muramoyl-L-alanyl-D-glutamyl-meso-2,6-diaminopimeloyl-D-alanyl-D-alanine + UDP-N-acetyl-alpha-D-glucosamine = di-trans,octa-cis-undecaprenyl diphospho-[N-acetyl-alpha-D-glucosaminyl-(1-&gt;4)]-N-acetyl-alpha-D-muramoyl-L-alanyl-D-glutamyl-meso-2,6-diaminopimeloyl-D-alanyl-D-alanine + UDP + H(+). It functions in the pathway cell wall biogenesis; peptidoglycan biosynthesis. In terms of biological role, cell wall formation. Catalyzes the transfer of a GlcNAc subunit on undecaprenyl-pyrophosphoryl-MurNAc-pentapeptide (lipid intermediate I) to form undecaprenyl-pyrophosphoryl-MurNAc-(pentapeptide)GlcNAc (lipid intermediate II). This Acinetobacter baylyi (strain ATCC 33305 / BD413 / ADP1) protein is UDP-N-acetylglucosamine--N-acetylmuramyl-(pentapeptide) pyrophosphoryl-undecaprenol N-acetylglucosamine transferase.